The following is a 230-amino-acid chain: 2,3-bisphosphoglycerate-dependent phosphoglycerate mutase (230 aa).

Residues Arg8–Asn15, Thr21–Gly22, Arg60, Glu87–Tyr90, Lys98, Arg114–Arg115, and Gly183–Asn184 contribute to the substrate site. His9 functions as the Tele-phosphohistidine intermediate in the catalytic mechanism. Residue Glu87 is the Proton donor/acceptor of the active site.

Belongs to the phosphoglycerate mutase family. BPG-dependent PGAM subfamily.

It catalyses the reaction (2R)-2-phosphoglycerate = (2R)-3-phosphoglycerate. It functions in the pathway carbohydrate degradation; glycolysis; pyruvate from D-glyceraldehyde 3-phosphate: step 3/5. In terms of biological role, catalyzes the interconversion of 2-phosphoglycerate and 3-phosphoglycerate. The sequence is that of 2,3-bisphosphoglycerate-dependent phosphoglycerate mutase from Streptococcus pneumoniae (strain P1031).